The primary structure comprises 266 residues: Apolipoprotein A-I (266 aa).

Residues 1-18 (MKAALLTLAVLFLTGSQA) form the signal peptide. 2 repeat units span residues 67 to 88 (LKLL…EQIG) and 89 to 110 (PVTQ…QEMS). The 10 X approximate tandem repeats stretch occupies residues 67 to 266 (LKLLDNWDSL…DEATKKLNAQ (200 aa)). Met-109 bears the Methionine sulfoxide mark. Residues 111-121 (KDLEEVKQKVQ) form a 3; half-length repeat. A run of 5 repeats spans residues 122–143 (PYLD…QKVA), 144–165 (PLGS…EKLS), 166–187 (PLAE…AQLA), 188–209 (PYSD…EGGG), and 210–231 (ASLA…EKAR). The stretch at 232–242 (PALEDLRQGLL) is one 9; half-length repeat. Copy 10 of the repeat occupies 243–266 (PVLESFKVSLLAAIDEATKKLNAQ).

Belongs to the apolipoprotein A1/A4/E family. In terms of assembly, homodimer. Interacts with APOA1BP and CLU. Component of a sperm activating protein complex (SPAP), consisting of APOA1, an immunoglobulin heavy chain, an immunoglobulin light chain and albumin. Interacts with NDRG1. Interacts with SCGB3A2. Interacts with NAXE and YJEFN3. In terms of processing, palmitoylated. Post-translationally, glycosylated. Phosphorylation sites are present in the extracellular medium. In terms of tissue distribution, major protein of plasma HDL, also found in chylomicrons. Synthesized in the liver and small intestine.

It localises to the secreted. Functionally, participates in the reverse transport of cholesterol from tissues to the liver for excretion by promoting cholesterol efflux from tissues and by acting as a cofactor for the lecithin cholesterol acyltransferase (LCAT). As part of the SPAP complex, activates spermatozoa motility. This chain is Apolipoprotein A-I (APOA1), found in Canis lupus familiaris (Dog).